A 250-amino-acid polypeptide reads, in one-letter code: DNA repair protein RecO (250 aa).

The protein belongs to the RecO family.

Its function is as follows. Involved in DNA repair and RecF pathway recombination. The sequence is that of DNA repair protein RecO from Rhodopseudomonas palustris (strain ATCC BAA-98 / CGA009).